Here is a 270-residue protein sequence, read N- to C-terminus: 3-methyl-2-oxobutanoate hydroxymethyltransferase (270 aa).

Mg(2+)-binding residues include Asp50 and Asp89. 3-methyl-2-oxobutanoate-binding positions include 50–51 (DS), Asp89, and Lys118. Residue Glu120 coordinates Mg(2+). Glu187 functions as the Proton acceptor in the catalytic mechanism.

The protein belongs to the PanB family. In terms of assembly, homodecamer; pentamer of dimers. The cofactor is Mg(2+).

The protein localises to the cytoplasm. The enzyme catalyses 3-methyl-2-oxobutanoate + (6R)-5,10-methylene-5,6,7,8-tetrahydrofolate + H2O = 2-dehydropantoate + (6S)-5,6,7,8-tetrahydrofolate. It participates in cofactor biosynthesis; (R)-pantothenate biosynthesis; (R)-pantoate from 3-methyl-2-oxobutanoate: step 1/2. Catalyzes the reversible reaction in which hydroxymethyl group from 5,10-methylenetetrahydrofolate is transferred onto alpha-ketoisovalerate to form ketopantoate. The polypeptide is 3-methyl-2-oxobutanoate hydroxymethyltransferase (Helicobacter acinonychis (strain Sheeba)).